The primary structure comprises 290 residues: Transcription cofactor vestigial-like protein 4 (290 aa).

Position 1 is an N-acetylmethionine (Met1). The span at 17–30 (ADDEKREAALRGEP) shows a compositional bias: basic and acidic residues. Disordered regions lie at residues 17 to 65 (ADDE…PGDE), 85 to 106 (LNKTANGDCRRDPRERSRSPIE), 140 to 161 (LDASRPAGLSPTLTPGERQQNR), and 254 to 290 (AAKDGASSSPESASRRGQPASPSAHMVSHSHSPSVVS). A Phosphoserine modification is found at Ser52. Basic and acidic residues predominate over residues 92-105 (DCRRDPRERSRSPI). Ser149 bears the Phosphoserine mark. The span at 150–161 (PTLTPGERQQNR) shows a compositional bias: polar residues. Thr153 bears the Phosphothreonine mark. Residues 272–290 (PASPSAHMVSHSHSPSVVS) are compositionally biased toward low complexity. Ser274 bears the Phosphoserine mark.

This sequence belongs to the vestigial family. In terms of assembly, interacts with TEFs. Interacts with IRF2BP2.

The protein resides in the nucleus. Its function is as follows. May act as a specific coactivator for the mammalian TEFs. This Homo sapiens (Human) protein is Transcription cofactor vestigial-like protein 4.